The following is an 816-amino-acid chain: Leucine--tRNA ligase (816 aa).

A 'HIGH' region motif is present at residues 40 to 51 (PYPSGSGLHVGH). The 'KMSKS' region signature appears at 576-580 (KMSKS). K579 is an ATP binding site.

The protein belongs to the class-I aminoacyl-tRNA synthetase family.

Its subcellular location is the cytoplasm. It catalyses the reaction tRNA(Leu) + L-leucine + ATP = L-leucyl-tRNA(Leu) + AMP + diphosphate. The chain is Leucine--tRNA ligase from Chlorobium phaeobacteroides (strain DSM 266 / SMG 266 / 2430).